Here is a 297-residue protein sequence, read N- to C-terminus: 33 kDa chaperonin (297 aa).

2 disulfides stabilise this stretch: Cys232-Cys234 and Cys266-Cys269.

This sequence belongs to the HSP33 family. Post-translationally, under oxidizing conditions two disulfide bonds are formed involving the reactive cysteines. Under reducing conditions zinc is bound to the reactive cysteines and the protein is inactive.

Its subcellular location is the cytoplasm. In terms of biological role, redox regulated molecular chaperone. Protects both thermally unfolding and oxidatively damaged proteins from irreversible aggregation. Plays an important role in the bacterial defense system toward oxidative stress. In Pseudomonas aeruginosa (strain UCBPP-PA14), this protein is 33 kDa chaperonin.